The sequence spans 20 residues: Putative 60 kDa spermidine-binding protein (20 aa).

The interval 1–20 (SXAAVVEPPETSQNRIAKGE) is disordered. A compositionally biased stretch (polar residues) spans 10–20 (ETSQNRIAKGE).

Dimer of 18 kDa and 60 kDa subunit.

It is found in the microsome membrane. It localises to the endoplasmic reticulum membrane. May have spermidine-binding activity. This Zea mays (Maize) protein is Putative 60 kDa spermidine-binding protein.